The following is a 256-amino-acid chain: 6-carboxyhexanoate--CoA ligase (256 aa).

This sequence belongs to the BioW family. In terms of assembly, homodimer. Mg(2+) serves as cofactor.

The enzyme catalyses heptanedioate + ATP + CoA = 6-carboxyhexanoyl-CoA + AMP + diphosphate. It functions in the pathway metabolic intermediate metabolism; pimeloyl-CoA biosynthesis; pimeloyl-CoA from pimelate: step 1/1. Its function is as follows. Catalyzes the transformation of pimelate into pimeloyl-CoA with concomitant hydrolysis of ATP to AMP. In Methanobrevibacter ruminantium (strain ATCC 35063 / DSM 1093 / JCM 13430 / OCM 146 / M1) (Methanobacterium ruminantium), this protein is 6-carboxyhexanoate--CoA ligase.